The primary structure comprises 206 residues: MELNVKTLEGKDAGKVSLSDAIFGLEPREDILARVIRWQLAKKQQGTHKAKGRAEVSRTGAKMYKQKGTGRARHHSARAPQFRGGGKAHGPVVRSHEHDLPKKVRALGLRHALSAKIKADDVIVIDNLVATEAKTKALASAFETLGLTNALFIGGAELDGNFKLAAQNIPNIDVLPIQGINVYDIVRRGKLVLSKAAVEALEERFK.

The disordered stretch occupies residues 63–97; sequence MYKQKGTGRARHHSARAPQFRGGGKAHGPVVRSHE. The span at 64–77 shows a compositional bias: basic residues; it reads YKQKGTGRARHHSA.

This sequence belongs to the universal ribosomal protein uL4 family. In terms of assembly, part of the 50S ribosomal subunit.

Functionally, one of the primary rRNA binding proteins, this protein initially binds near the 5'-end of the 23S rRNA. It is important during the early stages of 50S assembly. It makes multiple contacts with different domains of the 23S rRNA in the assembled 50S subunit and ribosome. In terms of biological role, forms part of the polypeptide exit tunnel. The sequence is that of Large ribosomal subunit protein uL4 from Rhizobium etli (strain CIAT 652).